The sequence spans 469 residues: Glutamine synthetase (469 aa).

The 82-residue stretch at 15–96 (EDVKFVDVRF…INFFIHDPIT (82 aa)) folds into the GS beta-grasp domain. The region spanning 104-469 (PRNVAKKAEA…PHEFEMYFDV (366 aa)) is the GS catalytic domain. Mg(2+) contacts are provided by Glu-129 and Glu-131. Glu-205 contributes to the ATP binding site. Mg(2+) is bound by residues Glu-210 and Glu-218. An ATP-binding site is contributed by 221-223 (YKF). L-glutamate contacts are provided by residues 262 to 263 (NG) and Gly-263. His-267 is a Mg(2+) binding site. Residues 269–271 (HQS) and Ser-271 contribute to the ATP site. L-glutamate-binding residues include Arg-320, Glu-326, and Arg-338. Positions 338, 343, and 352 each coordinate ATP. Residue Glu-357 coordinates Mg(2+). Arg-359 serves as a coordination point for L-glutamate. At Tyr-397 the chain carries O-AMP-tyrosine.

Belongs to the glutamine synthetase family. In terms of assembly, oligomer of 12 subunits arranged in the form of two hexagons. Mg(2+) serves as cofactor.

It is found in the cytoplasm. It catalyses the reaction L-glutamate + NH4(+) + ATP = L-glutamine + ADP + phosphate + H(+). The activity of this enzyme could be controlled by adenylation under conditions of abundant glutamine. Catalyzes the ATP-dependent biosynthesis of glutamine from glutamate and ammonia. Complements L-glutamine auxotrophy of an E.coli glnA mutant. In Streptomyces coelicolor (strain ATCC BAA-471 / A3(2) / M145), this protein is Glutamine synthetase.